Here is a 2009-residue protein sequence, read N- to C-terminus: Protein Daple (2009 aa).

The Calponin-homology (CH) domain maps to Leu11–Ala131. Residues Gln221 to His251 form a disordered region. Phosphoserine is present on residues Ser227 and Ser239. Residues Ser232–Ser245 show a composition bias toward low complexity. Coiled coils occupy residues Glu247–Ser425 and Glu456–Gly1008. Ser486 carries the phosphoserine modification. Positions Leu1002–His1036 are disordered. Residues Ser1025–His1036 show a composition bias toward basic and acidic residues. Residues His1190 to Lys1384 are a coiled coil. Residues Lys1410–Ser1419 are compositionally biased toward basic and acidic residues. Disordered stretches follow at residues Lys1410–Met1716 and Gly1757–Val1787. Residues Pro1430 to Ser1439 are compositionally biased toward low complexity. Position 1435 is a phosphoserine (Ser1435). Residues Gln1440 to Pro1449 are compositionally biased toward polar residues. Low complexity-rich tracts occupy residues Thr1510 to Thr1524 and Asn1562 to Gly1581. Ser1592 is subject to Phosphoserine. Positions His1652–Cys1683 match the GBA motif. Residues Pro1681–Asp1697 are compositionally biased toward basic and acidic residues. Residues Arg1761 to Cys1783 show a composition bias toward polar residues. Ser1798 is subject to Phosphoserine. Residues Ser1808–Val2009 form a disordered region. Positions Arg1866 to Leu1883 are enriched in basic and acidic residues. The span at Gly1898–Ser1911 shows a compositional bias: polar residues. Residues Thr1943 to Tyr1954 are compositionally biased toward gly residues. Residues Ser1981–Ala1991 are compositionally biased toward polar residues. Residues Tyr2006–Val2009 carry the PDZ-binding motif. The interval Gly2007 to Val2009 is DVL1-binding.

Belongs to the CCDC88 family. In terms of assembly, homooligomer. Interacts with DVL1 (via PDZ domain); dissociates following initiation of non-canonical Wnt signaling. Interacts (via C-terminus) with ligand-activated Wnt receptor FZD7; competes with DVL1 for binding to FZD7 and displaces DVL1 from ligand-activated FZD7. Interacts (via GBA motif) with guanine nucleotide-binding protein G(i) alpha subunits GNAI1, GNAI2 and GNAI3 (inactive GDP-bound form); interacts with higher affinity with GNAI1 and GNAI3 than with GNAI2 and interaction leads to G(i) alpha subunit activation. Does not interact with GNAO1.

It localises to the cytoplasm. The protein resides in the cell junction. In terms of biological role, required for activation of guanine nucleotide-binding proteins (G-proteins) during non-canonical Wnt signaling. Binds to ligand-activated Wnt receptor FZD7, displacing DVL1 from the FZD7 receptor and leading to inhibition of canonical Wnt signaling. Acts as a non-receptor guanine nucleotide exchange factor by also binding to guanine nucleotide-binding protein G(i) alpha (Gi-alpha) subunits, leading to their activation. Binding to Gi-alpha subunits displaces the beta and gamma subunits from the heterotrimeric G-protein complex, triggering non-canonical Wnt responses such as activation of RAC1 and PI3K-AKT signaling. Promotes apical constriction of cells via ARHGEF18. This Mus musculus (Mouse) protein is Protein Daple (Ccdc88c).